The chain runs to 391 residues: RAB6A-GEF complex partner protein 2 (391 aa).

This sequence belongs to the RGP1 family. Forms a complex with RIC1; the interaction enhances RAB6A GTPase activity. Interacts with RIC1. Interacts with RAB6A; the interaction is direct with a preference for RAB6A-GDP. Interacts with RAB33B.

The protein localises to the cytoplasm. It is found in the cytosol. The protein resides in the membrane. In terms of biological role, the RIC1-RGP1 complex acts as a guanine nucleotide exchange factor (GEF), which activates RAB6A by exchanging bound GDP for free GTP and may thereby required for efficient fusion of endosome-derived vesicles with the Golgi compartment. The RIC1-RGP1 complex participates in the recycling of mannose-6-phosphate receptors. The polypeptide is RAB6A-GEF complex partner protein 2 (Homo sapiens (Human)).